A 501-amino-acid chain; its full sequence is Lysine--tRNA ligase (501 aa).

Mg(2+)-binding residues include Glu412 and Glu419.

Belongs to the class-II aminoacyl-tRNA synthetase family. Homodimer. It depends on Mg(2+) as a cofactor.

It is found in the cytoplasm. The catalysed reaction is tRNA(Lys) + L-lysine + ATP = L-lysyl-tRNA(Lys) + AMP + diphosphate. This is Lysine--tRNA ligase (lysS) from Pasteurella multocida (strain Pm70).